Consider the following 21-residue polypeptide: Major outer membrane protein (21 aa).

Disulfide bond interactions within and between MOMP molecules and other components form high molecular-weight oligomers.

It is found in the cell outer membrane. Structural rigidity of the outer membrane of elementary bodies and porin forming, permitting diffusion of solutes through the intracellular reticulate body membrane. This Actinobacillus suis protein is Major outer membrane protein.